Consider the following 341-residue polypeptide: Malate dehydrogenase, mitochondrial (341 aa).

NAD(+) is bound by residues 35-41 (GAGGGIG) and D61. Residues R109 and R115 each contribute to the substrate site. N122 serves as a coordination point for NAD(+). Residues N147 and R181 each contribute to the substrate site. The Proton acceptor role is filled by H205. Position 254 (M254) interacts with NAD(+).

It belongs to the LDH/MDH superfamily. MDH type 1 family. In terms of assembly, homodimer.

It localises to the mitochondrion matrix. It catalyses the reaction (S)-malate + NAD(+) = oxaloacetate + NADH + H(+). The chain is Malate dehydrogenase, mitochondrial (MDH1) from Schizosaccharomyces pombe (strain 972 / ATCC 24843) (Fission yeast).